Reading from the N-terminus, the 445-residue chain is Enolase (445 aa).

Residues His-165 and Glu-174 each coordinate substrate. The active-site Proton donor is Glu-217. 3 residues coordinate Mg(2+): Asp-252, Glu-303, and Asp-330. Positions 303 and 330 each coordinate substrate. The active-site Proton acceptor is Lys-355. Substrate is bound by residues 382–385 (SHRS) and Lys-406.

The protein belongs to the enolase family. As to quaternary structure, homodimer. Mg(2+) is required as a cofactor.

It is found in the cytoplasm. The catalysed reaction is (2R)-2-phosphoglycerate = phosphoenolpyruvate + H2O. The protein operates within carbohydrate degradation; glycolysis; pyruvate from D-glyceraldehyde 3-phosphate: step 4/5. The sequence is that of Enolase (ENO) from Eimeria tenella (Coccidian parasite).